Reading from the N-terminus, the 136-residue chain is Small ribosomal subunit protein eS17A (136 aa).

The protein belongs to the eukaryotic ribosomal protein eS17 family. In terms of assembly, component of the small ribosomal subunit (SSU). Mature yeast ribosomes consist of a small (40S) and a large (60S) subunit. The 40S small subunit contains 1 molecule of ribosomal RNA (18S rRNA) and 33 different proteins (encoded by 57 genes). The large 60S subunit contains 3 rRNA molecules (25S, 5.8S and 5S rRNA) and 46 different proteins (encoded by 81 genes).

The protein resides in the cytoplasm. Component of the ribosome, a large ribonucleoprotein complex responsible for the synthesis of proteins in the cell. The small ribosomal subunit (SSU) binds messenger RNAs (mRNAs) and translates the encoded message by selecting cognate aminoacyl-transfer RNA (tRNA) molecules. The large subunit (LSU) contains the ribosomal catalytic site termed the peptidyl transferase center (PTC), which catalyzes the formation of peptide bonds, thereby polymerizing the amino acids delivered by tRNAs into a polypeptide chain. The nascent polypeptides leave the ribosome through a tunnel in the LSU and interact with protein factors that function in enzymatic processing, targeting, and the membrane insertion of nascent chains at the exit of the ribosomal tunnel. The sequence is that of Small ribosomal subunit protein eS17A from Saccharomyces cerevisiae (strain ATCC 204508 / S288c) (Baker's yeast).